Here is a 235-residue protein sequence, read N- to C-terminus: NifU-like protein 2, chloroplastic (235 aa).

The transit peptide at 1–16 directs the protein to the chloroplast; that stretch reads MQLLTLNPAAISRTPP.

It belongs to the NifU family. In terms of assembly, homodimer; disulfide-linked. [2Fe-2S] cluster is required as a cofactor. As to expression, predominantly expressed in leaves and floral stalks. Ubiquitous (at protein level).

It is found in the plastid. Its subcellular location is the chloroplast stroma. Its function is as follows. Molecular scaffold for [Fe-S] cluster assembly of chloroplastic iron-sulfur proteins. Required for biogenesis of ferredoxin, a major photosynthetic electron carrier containing [2Fe-2S] cluster. Required for the assembly of photosystem I complex. This Arabidopsis thaliana (Mouse-ear cress) protein is NifU-like protein 2, chloroplastic (NIFU2).